The primary structure comprises 722 residues: D-galactosyl-beta-1-&gt;4-L-rhamnose phosphorylase (722 aa).

The Proton donor role is filled by D319.

It belongs to the glycoside hydrolase 112 family.

The catalysed reaction is beta-D-galactosyl-(1-&gt;4)-L-rhamnose + phosphate = alpha-D-galactose 1-phosphate + L-rhamnopyranose. Its function is as follows. Reversibly phosphorolyzes beta-D-galactosyl-(1-&gt;4)-L-rhamnose to form alpha-D-galactose 1-phosphate and L-rhamnose. Does not phosphorolyze galacto-N-biose or lacto-N-biose. In the reverse reaction, has the highest activity toward L-rhamnose, also has activity toward L-mannose, and low activity toward L-lyxose, D-glucose, 2-deoxy-D-glucose and D-galactose. This is D-galactosyl-beta-1-&gt;4-L-rhamnose phosphorylase from Lachnoclostridium phytofermentans (strain ATCC 700394 / DSM 18823 / ISDg) (Clostridium phytofermentans).